Reading from the N-terminus, the 374-residue chain is Mannitol-1-phosphate 5-dehydrogenase (374 aa).

3 to 14 (AVHFGAGNIGRG) serves as a coordination point for NAD(+).

It belongs to the mannitol dehydrogenase family.

The catalysed reaction is D-mannitol 1-phosphate + NAD(+) = beta-D-fructose 6-phosphate + NADH + H(+). This chain is Mannitol-1-phosphate 5-dehydrogenase, found in Shouchella clausii (strain KSM-K16) (Alkalihalobacillus clausii).